Here is a 2480-residue protein sequence, read N- to C-terminus: Polyprotein P1234 (2480 aa).

One can recognise an Alphavirus-like MT domain in the interval 27–257 (ESQQVTPNDH…ESRRLLKSWH (231 aa)). The interval 242 to 261 (GXTLYIESRRLLKSWHLPSV) is nsP1 membrane-binding. Residues Cys415 and Cys417 are each lipidated (S-palmitoyl cysteine; by host). A disordered region spans residues 480-506 (YSGDRNEAREAEKEAEETKEAELTREA). Over residues 483 to 504 (DRNEAREAEKEAEETKEAELTR) the composition is skewed to basic and acidic residues. One can recognise a (+)RNA virus helicase ATP-binding domain in the interval 688 to 840 (DLINPPFHEF…HDICTQVLHK (153 aa)). An a ribonucleoside 5'-triphosphate-binding site is contributed by 719–726 (GVPGSGKS). The (+)RNA virus helicase C-terminal domain occupies 841 to 989 (SISRRCTLPI…LEEWQEEHDN (149 aa)). One can recognise a Peptidase C9 domain in the interval 1002–1324 (DPFQNKAKVC…QRLSSMFACN (323 aa)). Positions 1003–1022 (PFQNKAKVCWAKCLVQVLET) are nucleolus localization signal. Residue Cys1011 is the For cysteine protease nsP2 activity of the active site. Residues 1055–1064 (TKYYGVDLDS) carry the Nuclear export signal motif. The active-site For cysteine protease nsP2 activity is the His1080. Residues 1179 to 1183 (PHKRV) carry the Nuclear localization signal motif. The Macro domain maps to 1332–1491 (APSYRVRRTD…KIQEAIDRRT (160 aa)). ADP-D-ribose contacts are provided by Asp1341, Asn1355, Gly1363, Gly1443, Val1444, and Phe1445. Residues Cys1593, Cys1595, Cys1618, and Cys1636 each coordinate Zn(2+). Residue Thr1675 is modified to Phosphothreonine; by host. 2 consecutive short sequence motifs (FGDF; binding to host G3BP1) follow at residues 1843–1846 (FGDF) and 1854–1857 (FGDI). Residues 2234–2349 (DAVLETDIAS…HGVRSDPLMA (116 aa)) form the RdRp catalytic domain.

Interacts with non-structural protein 3. Interacts with RNA-directed RNA polymerase nsP4. Interacts with protease nsP2. interacts with itself. In terms of assembly, interacts with mRNA-capping enzyme nsP1. Interacts with host DDX1. Interacts with host DDX3. Interacts (via C-terminus) with host G3BP1; this interaction inhibits the formation of host stress granules on viral mRNAs and the nsp3-G3BP1 complexes bind viral RNAs and probably orchestrate the assembly of viral replication complexes. Interacts (via C-terminus) with host G3BP2; this interaction inhibits the formation of host stress granules on viral mRNAs and the nsp3-G3BP2 complexes bind viral RNAs and probably orchestrate the assembly of viral replication complexes. As to quaternary structure, interacts with mRNA-capping enzyme nsP1. Interacts with protease nsP2. interacts with itself. Interacts with RNA-directed RNA polymerase nsP4. Interacts with mRNA-capping enzyme nsP1. Interacts with KPNA1/karyopherin-alpha1; this interaction probably allows the active transport of protease nsP2 into the host nucleus. Mg(2+) is required as a cofactor. Mn(2+) serves as cofactor. Specific enzymatic cleavages in vivo yield mature proteins. The processing of the polyprotein is temporally regulated. In early stages (1.7 hpi), P1234 is first cleaved in trans through its nsP2 protease activity, releasing P123' and nsP4, which associate to form the early replication complex. At the same time, P1234 is also cut at the nsP1/nsP2 site early in infection but with lower efficiency. After replication of the viral minus-strand RNAs (4 hpi), the polyproteins are cut at the nsP1/nsP2 and nsP2/nsP3 sites very efficiently, preventing accumulation of P123' and P1234 and allowing the formation of the late replication complex. NsP3'/nsP4 site is not cleaved anymore and P34 is produced rather than nsP4. Post-translationally, specific enzymatic cleavages in vivo yield mature proteins. The processing of the polyprotein is temporally regulated. In early stages (1.7 hpi), P123 is cleaved at the nsP1/nsP2 site with low efficiency. After replication of the viral minus-strand RNAs (4 hpi), the polyproteins are cut at the nsP1/nsP2 and nsP2/nsP3 sites very efficiently, preventing accumulation of P123 and allowing the formation of the late replication complex. In terms of processing, specific enzymatic cleavages in vivo yield mature proteins. The processing of the polyprotein is temporally regulated. In early stages (1.7 hpi), P123' is cleaved at the nsP1/nsP2 site with low efficiency. After replication of the viral minus-strand RNAs (4 hpi), the polyproteins are cut at the nsP1/nsP2 and nsP2/nsP3 sites very efficiently, preventing accumulation of P123' and allowing the formation of the late replication complex. Palmitoylated by host palmitoyltransferases ZDHHC2 and ZDHHC19. Post-translationally, phosphorylated by host on serines and threonines. In terms of processing, ubiquitinated; targets the protein for rapid degradation via the ubiquitin system. Nsp4 is present in extremely low quantities due to low frequency of translation through the amber stop-codon and the degradation by the ubiquitin pathway.

The protein localises to the host cytoplasmic vesicle membrane. It localises to the host cell membrane. It is found in the host cell projection. Its subcellular location is the host filopodium. The protein resides in the host nucleus. The protein localises to the host cytoplasm. It catalyses the reaction GTP + S-adenosyl-L-methionine = N(7)-methyl-GTP + S-adenosyl-L-homocysteine. The catalysed reaction is N(7)-methyl-GTP + L-histidyl-[protein] = N(tele)-(N(7)-methylguanosine 5'-phospho)-L-histidyl-[protein] + diphosphate. The enzyme catalyses N(tele)-(N(7)-methylguanosine 5'-phospho)-L-histidyl-[protein] + a 5'-end diphospho-(purine-ribonucleoside) in mRNA + H(+) = a 5'-end (N(7)-methyl 5'-triphosphoguanosine)-(purine-ribonucleoside) in mRNA + L-histidyl-[protein]. It carries out the reaction a 5'-end triphospho-ribonucleoside in mRNA + H2O = a 5'-end diphospho-ribonucleoside in mRNA + phosphate + H(+). It catalyses the reaction a ribonucleoside 5'-triphosphate + H2O = a ribonucleoside 5'-diphosphate + phosphate + H(+). The catalysed reaction is ATP + H2O = ADP + phosphate + H(+). The enzyme catalyses RNA(n) + a ribonucleoside 5'-triphosphate = RNA(n+1) + diphosphate. It carries out the reaction 4-O-(ADP-D-ribosyl)-L-aspartyl-[protein] + H2O = L-aspartyl-[protein] + ADP-D-ribose + H(+). It catalyses the reaction 5-O-(ADP-D-ribosyl)-L-glutamyl-[protein] + H2O = L-glutamyl-[protein] + ADP-D-ribose + H(+). The catalysed reaction is RNA(n) + ATP = RNA(n)-3'-adenine ribonucleotide + diphosphate. The enzyme catalyses ADP-alpha-D-ribose 1''-phosphate + H2O = ADP-D-ribose + phosphate. In terms of biological role, inactive precursor of the viral replicase, which is activated by cleavages carried out by the viral protease nsP2. Its function is as follows. The early replication complex formed by the polyprotein P123 and nsP4 synthesizes minus-strand RNAs. As soon P123 is cleaved into mature proteins, the plus-strand RNAs synthesis begins. The early replication complex formed by the polyprotein P123' and nsP4 synthesizes minus-strand RNAs. Polyprotein P123' is a short-lived polyprotein that accumulates during early stage of infection. As soon P123' is cleaved into mature proteins, the plus-strand RNAs synthesis begins. Functionally, cytoplasmic capping enzyme that catalyzes two virus-specific reactions: methyltransferase and nsP1 guanylyltransferase. mRNA-capping is necessary since all viral RNAs are synthesized in the cytoplasm, and host capping enzymes are restricted to the nucleus. The enzymatic reaction involves a covalent link between 7-methyl-GMP and nsP1, whereas eukaryotic capping enzymes form a covalent complex only with GMP. nsP1 capping consists in the following reactions: GTP is first methylated into 7-methyl-GMP and then is covalently linked to nsP1 to form the m7GMp-nsP1 complex from which 7-methyl-GMP complex is transferred to the mRNA to create the cap structure. NsP1 is also needed for the initiation of the minus-strand RNAs synthesis. Probably serves as a membrane anchor for the replication complex composed of nsP1-nsP4. Palmitoylated nsP1 is remodeling host cell cytoskeleton, and induces filopodium-like structure formation at the surface of the host cell. In terms of biological role, multifunctional protein whose N-terminus is part of the RNA polymerase complex and displays NTPase, RNA triphosphatase and helicase activities. NTPase and RNA triphosphatase are involved in viral RNA capping and helicase keeps a check on the dsRNA replication intermediates. The C-terminus harbors a protease that specifically cleaves the polyproteins and releases the mature proteins. Required for the shutoff of minus-strand RNAs synthesis. Specifically inhibits the host IFN response by promoting the nuclear export of host STAT1. Also inhibits host transcription by inducing the rapid proteasome-dependent degradation of POLR2A, a catalytic subunit of the RNAPII complex. The resulting inhibition of cellular protein synthesis serves to ensure maximal viral gene expression and to evade host immune response. Its function is as follows. Seems to be essential for minus-strand RNAs and subgenomic 26S mRNAs synthesis. Displays mono-ADP-ribosylhydrolase activity. ADP-ribosylation is a post-translational modification that controls various processes of the host cell and the virus probably needs to revert it for optimal viral replication. Binds proteins of FXR family and sequesters them into the viral RNA replication complexes thereby inhibiting the formation of host stress granules on viral mRNAs. The nsp3'-FXR complexes bind viral RNAs and probably orchestrate the assembly of viral replication complexes, thanks to the ability of FXR family members to self-assemble and bind DNA. Seems to be essential for minus-strand RNAs and subgenomic 26S mRNAs synthesis. Displays mono-ADP-ribosylhydrolase activity. ADP-ribosylation is a post-translational modification that controls various processes of the host cell and the virus probably needs to revert it for optimal viral replication. Binds proteins of G3BP family and sequesters them into the viral RNA replication complexes thereby inhibiting the formation of host stress granules on viral mRNAs. The nsp3-G3BP complexes bind viral RNAs and probably orchestrate the assembly of viral replication complexes, thanks to the ability of G3BP family members to self-assemble and bind DNA. Functionally, RNA dependent RNA polymerase. Replicates genomic and antigenomic RNA by recognizing replications specific signals. The early replication complex formed by the polyprotein P123 and nsP4 synthesizes minus-strand RNAs. The late replication complex composed of fully processed nsP1-nsP4 is responsible for the production of genomic and subgenomic plus-strand RNAs. In Aedes (Common banded mosquito), this protein is Polyprotein P1234.